The following is a 587-amino-acid chain: Deoxynucleoside triphosphate triphosphohydrolase sahd-1 (587 aa).

In terms of domain architecture, HD spans 92–262 (RFVHSLGTFS…GHDVDKMDYL (171 aa)). Zn(2+) contacts are provided by His-95, His-134, Asp-135, and Asp-257. The tract at residues 554–587 (EKFLTPRKRSPQDSPDEVSSSCSTAKRRLEFGSS) is disordered. Position 558 is a phosphothreonine (Thr-558).

Belongs to the SAMHD1 family. In terms of assembly, homodimer. Homotetramer; in dGTP-bound form. Zn(2+) serves as cofactor.

Its subcellular location is the nucleus. The protein localises to the chromosome. The catalysed reaction is a 2'-deoxyribonucleoside 5'-triphosphate + H2O = a 2'-deoxyribonucleoside + triphosphate + H(+). Allosterically activated and regulated by GTP or dGTP. Allosteric activation promotes the formation of highly active homotetramers. Phosphorylation impairs homotetramerization, thereby inhibiting dNTPase activity. Its function is as follows. Has deoxynucleoside triphosphate (dNTPase) activity. dNTPase activity acts as a regulator of DNA precursor pools by regulating dNTP pools. Phosphorylation acts as a switch to control dNTPase-dependent and -independent functions. The polypeptide is Deoxynucleoside triphosphate triphosphohydrolase sahd-1 (Caenorhabditis elegans).